A 287-amino-acid chain; its full sequence is Very long chain fatty acid elongase 4 (287 aa).

The next 3 membrane-spanning stretches (helical) occupy residues 33–53, 64–84, and 115–135; these read ILVY…EHIM, PFVV…YSCV, and FWVF…VFLV. The short motif at 145 to 149 is the HxxHH motif element; sequence HWYHH. Catalysis depends on histidine 148, which acts as the Nucleophile. 4 helical membrane-spanning segments follow: residues 150–170, 172–192, 199–219, and 241–261; these read LTVA…GLWF, TMNY…ACGM, IAPF…LIVL, and LGLV…GKLY.

It belongs to the ELO family.

It is found in the membrane. It carries out the reaction a very-long-chain acyl-CoA + malonyl-CoA + H(+) = a very-long-chain 3-oxoacyl-CoA + CO2 + CoA. Its function is as follows. Involved in the synthesis of fatty acids. Elongates C16:0 and C18:0 fatty acids to C26:0, with C24:0 being the main product. The chain is Very long chain fatty acid elongase 4 from Trypanosoma cruzi (strain CL Brener).